Reading from the N-terminus, the 626-residue chain is ABC transporter G family member 8 (626 aa).

The ABC transporter domain occupies 56 to 300 (VNLDNKTENS…SLGYPCPNNT (245 aa)). 90-97 (GPSGSGKS) contacts ATP. The ABC transmembrane type-2 domain maps to 373-621 (GNALSRVITA…SLSYFALHFL (249 aa)). The next 7 membrane-spanning stretches (helical) occupy residues 376-396 (LSRV…FAGL), 409-429 (TLFF…TLFL), 447-467 (FPYF…VTLV), 485-505 (FFFA…FISS), 515-535 (LTFS…GFYV), 543-563 (AFGW…VVIN), and 600-620 (FGVL…ALHF).

The protein belongs to the ABC transporter superfamily. ABCG family. Eye pigment precursor importer (TC 3.A.1.204) subfamily.

Its subcellular location is the membrane. This Dictyostelium discoideum (Social amoeba) protein is ABC transporter G family member 8 (abcG8).